The following is a 251-amino-acid chain: MEKTRKDVCVPRHVAIIMDGNNRWAKKRLLPGVAGHKAGVDAVRAVIEVCAEAGVEVLTLFAFSSENWQRPADEVSALMELFLVALRREVRKLDENGIRLRIIGDRTRFHPELQAAMREAEAATAGNTRFLLQVAANYGGQWDIVQAAQRLAREVQGGHLAADDISAELLQGCLVTGDQPLPDLCIRTGGEHRISNFLLWQLAYAELYFSDLFWPDFKHAAMRAALADFSKRQRRFGKTSEQVEAEARPSC.

Aspartate 19 is an active-site residue. Aspartate 19 lines the Mg(2+) pocket. Substrate is bound by residues 20-23 (GNNR), tryptophan 24, histidine 36, and 64-66 (SSE). Asparagine 67 (proton acceptor) is an active-site residue. Residues tryptophan 68, arginine 70, arginine 187, and 193–195 (RIS) contribute to the substrate site. Glutamate 206 serves as a coordination point for Mg(2+).

This sequence belongs to the UPP synthase family. Homodimer. The cofactor is Mg(2+).

The enzyme catalyses 8 isopentenyl diphosphate + (2E,6E)-farnesyl diphosphate = di-trans,octa-cis-undecaprenyl diphosphate + 8 diphosphate. Its function is as follows. Catalyzes the sequential condensation of isopentenyl diphosphate (IPP) with (2E,6E)-farnesyl diphosphate (E,E-FPP) to yield (2Z,6Z,10Z,14Z,18Z,22Z,26Z,30Z,34E,38E)-undecaprenyl diphosphate (di-trans,octa-cis-UPP). UPP is the precursor of glycosyl carrier lipid in the biosynthesis of bacterial cell wall polysaccharide components such as peptidoglycan and lipopolysaccharide. The sequence is that of Ditrans,polycis-undecaprenyl-diphosphate synthase ((2E,6E)-farnesyl-diphosphate specific) from Pseudomonas aeruginosa (strain ATCC 15692 / DSM 22644 / CIP 104116 / JCM 14847 / LMG 12228 / 1C / PRS 101 / PAO1).